A 1128-amino-acid chain; its full sequence is Large proline-rich protein BAG6 (1128 aa).

An N-acetylmethionine modification is found at Met1. One can recognise a Ubiquitin-like domain in the interval Leu17 to Thr92. Disordered regions lie at residues Arg87 to Asp126, Cys185 to Ser267, Val380 to His435, Ile456 to Gly523, and Pro555 to Asp598. Positions Pro95–Thr108 are enriched in low complexity. Phosphoserine is present on Ser96. Thr117 bears the Phosphothreonine mark. Over residues Ser189–Pro201 the composition is skewed to polar residues. Copy 1 of the repeat occupies Arg236–His265. Residues Arg236–Met630 are 4 X 29 AA approximate repeats. Low complexity predominate over residues Ser238–Ser247. 2 stretches are compositionally biased toward pro residues: residues Gly248–Ala257 and Arg388–Pro402. Low complexity predominate over residues Gly403–Ser412. Repeat unit 2 spans residues Pro410–Val438. Composition is skewed to pro residues over residues Ala422–Ala433 and Pro502–Pro515. Low complexity predominate over residues Ala564–Pro581. 2 repeat units span residues Ser569–Ala596 and Ser602–Met630. The segment covering Pro583–Pro594 has biased composition (pro residues). Disordered regions lie at residues Gln648 to Pro689 and Val939 to Pro1128. Over residues Pro652–Pro677 the composition is skewed to pro residues. Gly residues predominate over residues Pro678 to Gly688. Residues Ser960 and Ser969 each carry the phosphoserine modification. Residues Ala999 to Pro1016 are compositionally biased toward low complexity. The interval Trp1006–Asp1036 is required for interaction with GET4. A Nuclear localization site motif is present at residues Ala1008 to Met1050. The sufficient for the delivery of client proteins to the endoplasmic reticulum stretch occupies residues Ile1018–Pro1128. A Phosphothreonine modification is found at Thr1049. A BAG-similar domain, required and sufficient for interaction with UBL4A region spans residues Gly1054–Asn1111. A compositionally biased stretch (low complexity) spans Ala1062–Ala1072. A phosphoserine mark is found at Ser1077 and Ser1113.

Component of the BAG6/BAT3 complex, also named BAT3 complex, at least composed of BAG6, UBL4A and GET4/TRC35. Interacts with GET4; the interaction is direct and localizes BAG6 in the cytosol. Interacts with UBL4A; the interaction is direct and required for UBL4A protein stability. Interacts with AIFM1. Interacts with HSPA2. Interacts with CTCFL. Interacts with p300/EP300. Interacts (via ubiquitin-like domain) with RNF126; required for BAG6-dependent ubiquitination of proteins mislocalized to the cytosol. Interacts (via ubiquitin-like domain) with SGTA; SGTA competes with RNF126 by binding the same region of BAG6, thereby promoting deubiquitination of BAG6-target proteins and rescuing them from degradation. Interacts with ricin A chain. Interacts with VCP and AMFR; both form the VCP/p97-AMFR/gp78 complex. Interacts with SYVN1. Interacts with USP13; the interaction is direct and may mediate UBL4A deubiquitination. Interacts with ZFAND2B. Interacts with KPNA2. Interacts with UBQLN4. In terms of processing, ricin can induce a cleavage by the caspase CASP3. The released C-terminal peptide induces apoptosis.

The protein resides in the cytoplasm. Its subcellular location is the cytosol. The protein localises to the nucleus. It localises to the secreted. It is found in the extracellular exosome. ATP-independent molecular chaperone preventing the aggregation of misfolded and hydrophobic patches-containing proteins. Functions as part of a cytosolic protein quality control complex, the BAG6/BAT3 complex, which maintains these client proteins in a soluble state and participates in their proper delivery to the endoplasmic reticulum or alternatively can promote their sorting to the proteasome where they undergo degradation. The BAG6/BAT3 complex is involved in the post-translational delivery of tail-anchored/type II transmembrane proteins to the endoplasmic reticulum membrane. Recruited to ribosomes, it interacts with the transmembrane region of newly synthesized tail-anchored proteins and together with SGTA and ASNA1 mediates their delivery to the endoplasmic reticulum. Client proteins that cannot be properly delivered to the endoplasmic reticulum are ubiquitinated by RNF126, an E3 ubiquitin-protein ligase associated with BAG6 and are sorted to the proteasome. SGTA which prevents the recruitment of RNF126 to BAG6 may negatively regulate the ubiquitination and the proteasomal degradation of client proteins. Similarly, the BAG6/BAT3 complex also functions as a sorting platform for proteins of the secretory pathway that are mislocalized to the cytosol either delivering them to the proteasome for degradation or to the endoplasmic reticulum. The BAG6/BAT3 complex also plays a role in the endoplasmic reticulum-associated degradation (ERAD), a quality control mechanism that eliminates unwanted proteins of the endoplasmic reticulum through their retrotranslocation to the cytosol and their targeting to the proteasome. It maintains these retrotranslocated proteins in an unfolded yet soluble state condition in the cytosol to ensure their proper delivery to the proteasome. BAG6 is also required for selective ubiquitin-mediated degradation of defective nascent chain polypeptides by the proteasome. In this context, it may participate in the production of antigenic peptides and play a role in antigen presentation in immune response. BAG6 is also involved in endoplasmic reticulum stress-induced pre-emptive quality control, a mechanism that selectively attenuates the translocation of newly synthesized proteins into the endoplasmic reticulum and reroutes them to the cytosol for proteasomal degradation. BAG6 may ensure the proper degradation of these proteins and thereby protects the endoplasmic reticulum from protein overload upon stress. By inhibiting the polyubiquitination and subsequent proteasomal degradation of HSPA2 it may also play a role in the assembly of the synaptonemal complex during spermatogenesis. Also positively regulates apoptosis by interacting with and stabilizing the proapoptotic factor AIFM1. By controlling the steady-state expression of the IGF1R receptor, indirectly regulates the insulin-like growth factor receptor signaling pathway. Its function is as follows. Involved in DNA damage-induced apoptosis: following DNA damage, accumulates in the nucleus and forms a complex with p300/EP300, enhancing p300/EP300-mediated p53/TP53 acetylation leading to increase p53/TP53 transcriptional activity. When nuclear, may also act as a component of some chromatin regulator complex that regulates histone 3 'Lys-4' dimethylation (H3K4me2). Functionally, released extracellularly via exosomes, it is a ligand of the natural killer/NK cells receptor NCR3 and stimulates NK cells cytotoxicity. It may thereby trigger NK cells cytotoxicity against neighboring tumor cells and immature myeloid dendritic cells (DC). In terms of biological role, may mediate ricin-induced apoptosis. The sequence is that of Large proline-rich protein BAG6 from Sus scrofa (Pig).